The chain runs to 566 residues: Proline--tRNA ligase 1 (566 aa).

The protein belongs to the class-II aminoacyl-tRNA synthetase family. ProS type 1 subfamily. As to quaternary structure, homodimer.

The protein localises to the cytoplasm. It catalyses the reaction tRNA(Pro) + L-proline + ATP = L-prolyl-tRNA(Pro) + AMP + diphosphate. In terms of biological role, catalyzes the attachment of proline to tRNA(Pro) in a two-step reaction: proline is first activated by ATP to form Pro-AMP and then transferred to the acceptor end of tRNA(Pro). As ProRS can inadvertently accommodate and process non-cognate amino acids such as alanine and cysteine, to avoid such errors it has two additional distinct editing activities against alanine. One activity is designated as 'pretransfer' editing and involves the tRNA(Pro)-independent hydrolysis of activated Ala-AMP. The other activity is designated 'posttransfer' editing and involves deacylation of mischarged Ala-tRNA(Pro). The misacylated Cys-tRNA(Pro) is not edited by ProRS. This is Proline--tRNA ligase 1 from Bacillus thuringiensis subsp. konkukian (strain 97-27).